We begin with the raw amino-acid sequence, 283 residues long: MRFVIPSKGRLKDATLELLERAGIRPSYLDSRALIVPSNKPNLDLVFARPEDIPWIVESGAAEVGITGHDYVLESGRDVAEILDLNYGRSKLVLAVPRDSGIKRPEELPKGFRIATKFINIATDYFEKKGLDVKIVKVSGSAEVMPGIGAADGIIDVMSTGTTLKLHGLTPIDVILSSSARLIVRKDLLDDPRVETIKLMLESVLRASKKKLVMMNVPDEALDDVLKVLPAMSGPTISKVKSEKPMWEVIAAVDEDEIADIIVKLKNAGAKDILVLNVERLIP.

This sequence belongs to the ATP phosphoribosyltransferase family. Long subfamily. Mg(2+) is required as a cofactor.

Its subcellular location is the cytoplasm. The catalysed reaction is 1-(5-phospho-beta-D-ribosyl)-ATP + diphosphate = 5-phospho-alpha-D-ribose 1-diphosphate + ATP. It participates in amino-acid biosynthesis; L-histidine biosynthesis; L-histidine from 5-phospho-alpha-D-ribose 1-diphosphate: step 1/9. Feedback inhibited by histidine. Catalyzes the condensation of ATP and 5-phosphoribose 1-diphosphate to form N'-(5'-phosphoribosyl)-ATP (PR-ATP). Has a crucial role in the pathway because the rate of histidine biosynthesis seems to be controlled primarily by regulation of HisG enzymatic activity. This chain is ATP phosphoribosyltransferase, found in Ignicoccus hospitalis (strain KIN4/I / DSM 18386 / JCM 14125).